A 95-amino-acid polypeptide reads, in one-letter code: MSGKPPVYRLPPLPRLKVKKPIIRQEANKCLVLMSNLLQCWSSYGHMSPKCAGLVTELKSCTSESALGKRNNVQKSNINYHAARLYDRINGKPHD.

A CHCH domain is found at 27-69; the sequence is ANKCLVLMSNLLQCWSSYGHMSPKCAGLVTELKSCTSESALGK. 2 short sequence motifs (cx9C motif) span residues 30 to 40 and 51 to 61; these read CLVLMSNLLQC and CAGLVTELKSC. 2 disulfides stabilise this stretch: C30–C61 and C40–C51.

It belongs to the mitochondrion-specific ribosomal protein mS37 family. Component of the mitochondrial small ribosomal subunit (mt-SSU). Mature yeast 74S mitochondrial ribosomes consist of a small (37S) and a large (54S) subunit. The 37S small subunit contains a 15S ribosomal RNA (15S mt-rRNA) and 34 different proteins. The 54S large subunit contains a 21S rRNA (21S mt-rRNA) and 46 different proteins.

Its subcellular location is the mitochondrion. It is found in the mitochondrion matrix. In terms of biological role, component of the mitochondrial ribosome (mitoribosome), a dedicated translation machinery responsible for the synthesis of mitochondrial genome-encoded proteins, including at least some of the essential transmembrane subunits of the mitochondrial respiratory chain. The mitoribosomes are attached to the mitochondrial inner membrane and translation products are cotranslationally integrated into the membrane. In Saccharomyces cerevisiae (strain ATCC 204508 / S288c) (Baker's yeast), this protein is Small ribosomal subunit protein mS37 (MRP10).